The primary structure comprises 252 residues: 5'-nucleotidase SurE (252 aa).

Residues aspartate 8, aspartate 9, serine 39, and asparagine 95 each coordinate a divalent metal cation.

Belongs to the SurE nucleotidase family. A divalent metal cation serves as cofactor.

It localises to the cytoplasm. The enzyme catalyses a ribonucleoside 5'-phosphate + H2O = a ribonucleoside + phosphate. Functionally, nucleotidase that shows phosphatase activity on nucleoside 5'-monophosphates. The chain is 5'-nucleotidase SurE from Clostridium botulinum (strain 657 / Type Ba4).